The sequence spans 299 residues: 4-hydroxy-tetrahydrodipicolinate synthase (299 aa).

Thr-50 is a pyruvate binding site. Residue Tyr-139 is the Proton donor/acceptor of the active site. Lys-167 serves as the catalytic Schiff-base intermediate with substrate. Pyruvate is bound at residue Val-209.

It belongs to the DapA family. In terms of assembly, homotetramer; dimer of dimers.

It localises to the cytoplasm. The catalysed reaction is L-aspartate 4-semialdehyde + pyruvate = (2S,4S)-4-hydroxy-2,3,4,5-tetrahydrodipicolinate + H2O + H(+). The protein operates within amino-acid biosynthesis; L-lysine biosynthesis via DAP pathway; (S)-tetrahydrodipicolinate from L-aspartate: step 3/4. Its function is as follows. Catalyzes the condensation of (S)-aspartate-beta-semialdehyde [(S)-ASA] and pyruvate to 4-hydroxy-tetrahydrodipicolinate (HTPA). In Synechococcus elongatus (strain ATCC 33912 / PCC 7942 / FACHB-805) (Anacystis nidulans R2), this protein is 4-hydroxy-tetrahydrodipicolinate synthase.